A 490-amino-acid chain; its full sequence is Probable cytosol aminopeptidase (490 aa).

Residues K256 and D261 each coordinate Mn(2+). Residue K268 is part of the active site. 3 residues coordinate Mn(2+): D280, D340, and E342. The active site involves R344.

The protein belongs to the peptidase M17 family. The cofactor is Mn(2+).

It localises to the cytoplasm. The catalysed reaction is Release of an N-terminal amino acid, Xaa-|-Yaa-, in which Xaa is preferably Leu, but may be other amino acids including Pro although not Arg or Lys, and Yaa may be Pro. Amino acid amides and methyl esters are also readily hydrolyzed, but rates on arylamides are exceedingly low.. The enzyme catalyses Release of an N-terminal amino acid, preferentially leucine, but not glutamic or aspartic acids.. Functionally, presumably involved in the processing and regular turnover of intracellular proteins. Catalyzes the removal of unsubstituted N-terminal amino acids from various peptides. This is Probable cytosol aminopeptidase from Synechococcus sp. (strain CC9902).